A 437-amino-acid chain; its full sequence is Protein farnesyltransferase subunit beta (437 aa).

5 PFTB repeats span residues 123–164, 174–215, 222–263, 270–312, and 332–374; these read ATDV…CIIG, REKL…SLTN, FEGT…VILK, LKSL…PLLH, and QQAL…SIAQ. (2E,6E)-farnesyl diphosphate-binding positions include 248–251 and 291–294; these read HGGY and RCNK. Residues Asp-297 and Cys-299 each contribute to the Zn(2+) site. 300–303 is a binding site for (2E,6E)-farnesyl diphosphate; the sequence is YSFW. Residue His-362 participates in Zn(2+) binding. Phosphothreonine is present on Thr-436.

Belongs to the protein prenyltransferase subunit beta family. Heterodimer of FNTA and FNTB. It depends on Zn(2+) as a cofactor.

The catalysed reaction is L-cysteinyl-[protein] + (2E,6E)-farnesyl diphosphate = S-(2E,6E)-farnesyl-L-cysteinyl-[protein] + diphosphate. In terms of biological role, essential subunit of the farnesyltransferase complex. Catalyzes the transfer of a farnesyl moiety from farnesyl diphosphate to a cysteine at the fourth position from the C-terminus of several proteins having the C-terminal sequence Cys-aliphatic-aliphatic-X. This chain is Protein farnesyltransferase subunit beta (FNTB), found in Homo sapiens (Human).